The chain runs to 622 residues: Mitochondrial Rho GTPase 2 (622 aa).

The Cytoplasmic portion of the chain corresponds to 1 to 596 (MRRDVRILLL…ELHPTPFWLR (596 aa)). Residues 2-168 (RRDVRILLLG…FYYAQKAVLH (167 aa)) enclose the Miro 1 domain. 4 residues coordinate GTP: glycine 16, lysine 17, threonine 18, and serine 19. Residue threonine 18 participates in Mg(2+) binding. Aspartate 57 is a Mg(2+) binding site. Serine 59 is a binding site for GTP. Lysine 96 participates in a covalent cross-link: Glycyl lysine isopeptide (Lys-Gly) (interchain with G-Cter in ubiquitin). GTP-binding residues include asparagine 118, lysine 119, aspartate 121, alanine 149, and lysine 150. A Glycyl lysine isopeptide (Lys-Gly) (interchain with G-Cter in ubiquitin) cross-link involves residue lysine 119. A Glycyl lysine isopeptide (Lys-Gly) (interchain with G-Cter in ubiquitin) cross-link involves residue lysine 164. EF-hand domains are found at residues 184 to 219 (ACAQ…CFGH) and 304 to 339 (RGYQ…FSVA). 8 residues coordinate Ca(2+): aspartate 197, aspartate 199, aspartate 201, glutamate 208, aspartate 317, aspartate 319, aspartate 321, and glutamate 328. In terms of domain architecture, Miro 2 spans 415 to 580 (RSVLMCKVLG…FTQLATMATF (166 aa)). Positions 427, 429, 430, 431, and 432 each coordinate GTP. Serine 431 is a binding site for Mg(2+). Glutamate 475 is a Mg(2+) binding site. GTP contacts are provided by lysine 529, aspartate 531, and cysteine 560. Residues 597 to 619 (GVLVAVGTAVAAVLSFSLYRVLV) traverse the membrane as a helical; Anchor for type IV membrane protein segment. Topologically, residues 620–622 (KSR) are mitochondrial intermembrane.

The protein belongs to the mitochondrial Rho GTPase family. In terms of assembly, homodimer. Interacts with the kinesin-binding proteins TRAK1/OIP106 and TRAK2/GRIF1, forming a link between mitochondria and the trafficking apparatus of the microtubules. Interacts with ARMCX3. Found in a complex with KIF5B, OGT, RHOT1 and TRAK1. Ubiquitinated by PRKN in a PINK1-dependent manner, leading to its degradation.

The protein resides in the mitochondrion outer membrane. It catalyses the reaction GTP + H2O = GDP + phosphate + H(+). The catalysed reaction is ATP + H2O = ADP + phosphate + H(+). The enzyme catalyses UTP + H2O = UDP + phosphate + H(+). Atypical mitochondrial nucleoside-triphosphatase (NTPase) involved in mitochondrial trafficking. Probably involved in control of anterograde transport of mitochondria and their subcellular distribution. Can hydrolyze GTP, ATP and UTP. This chain is Mitochondrial Rho GTPase 2 (Rhot2), found in Rattus norvegicus (Rat).